A 41-amino-acid polypeptide reads, in one-letter code: Large ribosomal subunit protein bL36B (41 aa).

Belongs to the bacterial ribosomal protein bL36 family.

The chain is Large ribosomal subunit protein bL36B from Vibrio campbellii (strain ATCC BAA-1116).